The primary structure comprises 340 residues: Glyceraldehyde-3-phosphate dehydrogenase (340 aa).

NAD(+) contacts are provided by residues 11-12 (SI) and Gly111. A D-glyceraldehyde 3-phosphate-binding site is contributed by 140–142 (SCN). Cys141 functions as the Nucleophile in the catalytic mechanism. Arg169 contributes to the NAD(+) binding site. 195–196 (HG) lines the D-glyceraldehyde 3-phosphate pocket. Gln303 contributes to the NAD(+) binding site.

This sequence belongs to the glyceraldehyde-3-phosphate dehydrogenase family. Homotetramer.

The protein resides in the cytoplasm. It carries out the reaction D-glyceraldehyde 3-phosphate + phosphate + NADP(+) = (2R)-3-phospho-glyceroyl phosphate + NADPH + H(+). It catalyses the reaction D-glyceraldehyde 3-phosphate + phosphate + NAD(+) = (2R)-3-phospho-glyceroyl phosphate + NADH + H(+). It functions in the pathway carbohydrate degradation; glycolysis; pyruvate from D-glyceraldehyde 3-phosphate: step 1/5. The protein is Glyceraldehyde-3-phosphate dehydrogenase of Methanococcus maripaludis (strain DSM 14266 / JCM 13030 / NBRC 101832 / S2 / LL).